We begin with the raw amino-acid sequence, 392 residues long: ATP-dependent RNA helicase eIF4A (392 aa).

The Q motif motif lies at 19–47 (DTFDDMNLKPELLRGIYAYGFERPSAIQQ). In terms of domain architecture, Helicase ATP-binding spans 50-220 (IMPILGERDV…TKFMRDPIRI (171 aa)). 63 to 70 (AQSGTGKT) lines the ATP pocket. Residue Ser65 is modified to Phosphoserine. The DEAD box signature appears at 168-171 (DEAD). The region spanning 231–392 (GIKQFYVAVE…EMPMNIADLI (162 aa)) is the Helicase C-terminal domain.

Belongs to the DEAD box helicase family. eIF4A subfamily. As to quaternary structure, component of the eIF4F complex, which composition varies with external and internal environmental conditions. It is composed of at least eIF4A, eIF4E and eIF4G.

It is found in the cytoplasm. It carries out the reaction ATP + H2O = ADP + phosphate + H(+). Its function is as follows. ATP-dependent RNA helicase which is a subunit of the eIF4F complex involved in cap recognition and is required for mRNA binding to ribosome. In the current model of translation initiation, eIF4A unwinds RNA secondary structures in the 5'-UTR of mRNAs which is necessary to allow efficient binding of the small ribosomal subunit, and subsequent scanning for the initiator codon. This chain is ATP-dependent RNA helicase eIF4A (tif1), found in Schizosaccharomyces pombe (strain 972 / ATCC 24843) (Fission yeast).